A 284-amino-acid chain; its full sequence is Phosphonates import ATP-binding protein PhnC 1 (284 aa).

In terms of domain architecture, ABC transporter spans isoleucine 5–alanine 253. Position 38 to 45 (glycine 38 to serine 45) interacts with ATP.

It belongs to the ABC transporter superfamily. Phosphonates importer (TC 3.A.1.9.1) family. The complex is composed of two ATP-binding proteins (PhnC), two transmembrane proteins (PhnE) and a solute-binding protein (PhnD).

The protein resides in the cell inner membrane. It carries out the reaction phosphonate(out) + ATP + H2O = phosphonate(in) + ADP + phosphate + H(+). Functionally, part of the ABC transporter complex PhnCDE involved in phosphonates import. Responsible for energy coupling to the transport system. The chain is Phosphonates import ATP-binding protein PhnC 1 from Cupriavidus metallidurans (strain ATCC 43123 / DSM 2839 / NBRC 102507 / CH34) (Ralstonia metallidurans).